Consider the following 550-residue polypeptide: Arginine--tRNA ligase (550 aa).

The 'HIGH' region signature appears at 125–135 (ANPTGPLHIGH).

Belongs to the class-I aminoacyl-tRNA synthetase family. As to quaternary structure, monomer.

The protein resides in the cytoplasm. It catalyses the reaction tRNA(Arg) + L-arginine + ATP = L-arginyl-tRNA(Arg) + AMP + diphosphate. This is Arginine--tRNA ligase from Lawsonia intracellularis (strain PHE/MN1-00).